Here is a 462-residue protein sequence, read N- to C-terminus: tRNA(Ile)-lysidine synthase (462 aa).

Ser27–Ser32 lines the ATP pocket.

The protein belongs to the tRNA(Ile)-lysidine synthase family.

It is found in the cytoplasm. It carries out the reaction cytidine(34) in tRNA(Ile2) + L-lysine + ATP = lysidine(34) in tRNA(Ile2) + AMP + diphosphate + H(+). In terms of biological role, ligates lysine onto the cytidine present at position 34 of the AUA codon-specific tRNA(Ile) that contains the anticodon CAU, in an ATP-dependent manner. Cytidine is converted to lysidine, thus changing the amino acid specificity of the tRNA from methionine to isoleucine. The protein is tRNA(Ile)-lysidine synthase of Clostridioides difficile (strain 630) (Peptoclostridium difficile).